Here is a 521-residue protein sequence, read N- to C-terminus: Colicin-E1* (521 aa).

Disordered regions lie at residues 26–52 (NGNPDGSGSGGGGGTGGSKSESSAAIH) and 127–163 (SGCALQKQKKKPVKKRKRAEKSFQEAEQRRKEIEKEQ). Over residues 30–42 (DGSGSGGGGGTGG) the composition is skewed to gly residues. A compositionally biased stretch (basic residues) spans 133 to 145 (KQKKKPVKKRKRA). Basic and acidic residues predominate over residues 146–163 (EKSFQEAEQRRKEIEKEQ). Transmembrane regions (helical) follow at residues 470–486 (AVDAGVSYVVVLLFSVL) and 493–509 (IWGIAIVTGILCAFIDK).

It belongs to the channel forming colicin family.

The protein localises to the cell membrane. In terms of biological role, this colicin is a channel-forming colicin. This class of transmembrane toxins depolarize the cytoplasmic membrane, leading to dissipation of cellular energy. Its function is as follows. Colicins are polypeptide toxins produced by and active against E.coli and closely related bacteria. In Shigella sonnei, this protein is Colicin-E1* (cea).